The primary structure comprises 302 residues: Methionyl-tRNA formyltransferase (302 aa).

103–106 contributes to the (6S)-5,6,7,8-tetrahydrofolate binding site; sequence SLLP.

It belongs to the Fmt family.

The enzyme catalyses L-methionyl-tRNA(fMet) + (6R)-10-formyltetrahydrofolate = N-formyl-L-methionyl-tRNA(fMet) + (6S)-5,6,7,8-tetrahydrofolate + H(+). Functionally, attaches a formyl group to the free amino group of methionyl-tRNA(fMet). The formyl group appears to play a dual role in the initiator identity of N-formylmethionyl-tRNA by promoting its recognition by IF2 and preventing the misappropriation of this tRNA by the elongation apparatus. This is Methionyl-tRNA formyltransferase from Pseudothermotoga lettingae (strain ATCC BAA-301 / DSM 14385 / NBRC 107922 / TMO) (Thermotoga lettingae).